Reading from the N-terminus, the 279-residue chain is Pantothenate synthetase (279 aa).

Residue 26–33 coordinates ATP; that stretch reads MGNLHEGH. The active-site Proton donor is the His33. Residue Gln57 coordinates (R)-pantoate. A beta-alanine-binding site is contributed by Gln57. 144–147 contacts ATP; that stretch reads GKKD. Gln150 contacts (R)-pantoate. ATP contacts are provided by residues Val173 and 181 to 184; that span reads LSSR.

Belongs to the pantothenate synthetase family. In terms of assembly, homodimer.

The protein localises to the cytoplasm. The catalysed reaction is (R)-pantoate + beta-alanine + ATP = (R)-pantothenate + AMP + diphosphate + H(+). It functions in the pathway cofactor biosynthesis; (R)-pantothenate biosynthesis; (R)-pantothenate from (R)-pantoate and beta-alanine: step 1/1. Functionally, catalyzes the condensation of pantoate with beta-alanine in an ATP-dependent reaction via a pantoyl-adenylate intermediate. This chain is Pantothenate synthetase, found in Burkholderia ambifaria (strain MC40-6).